The following is a 425-amino-acid chain: UPF0229 protein SG1344 (425 aa).

The disordered stretch occupies residues 49–109; that stretch reads GESVSIPNTD…GQGSVSQDGE (61 aa). A compositionally biased stretch (polar residues) spans 50-59; that stretch reads ESVSIPNTDI. Residues 77–90 show a composition bias toward basic and acidic residues; the sequence is PGNDHFVQNDRIER.

The protein belongs to the UPF0229 family.

The chain is UPF0229 protein SG1344 from Sodalis glossinidius (strain morsitans).